The primary structure comprises 173 residues: Globin, cuticular isoform (173 aa).

An N-terminal signal peptide occupies residues 1–16; the sequence is MLWFVAVCFAIASVSA. Residues 17–166 form the Globin domain; that stretch reads MSPADVKKHT…FNSEAQHQLE (150 aa). His-113 provides a ligand contact to heme b.

The protein belongs to the globin family. Expressed only by adult nematodes in the gut.

Its subcellular location is the secreted. The protein resides in the extracellular space. The polypeptide is Globin, cuticular isoform (GLBC) (Nippostrongylus brasiliensis (Rat hookworm)).